The primary structure comprises 233 residues: ATP synthase subunit a (233 aa).

7 helical membrane passes run 29–49 (FKHVFYTWCVMAMLFAVSFIV), 60–80 (LQNIFEVIIGGLEEFVVSITG), 89–109 (VLIVFFLFILCMNLTGLVPGF), 115–135 (NINTTASLALFCFIYYNYIGI), 143–163 (IKHFMGPMWWLSPLMLPLELI), 185–205 (FVLILFFMLAPIIGTIPIYFL), and 206–226 (FTLAKVLQAFIFFMLATIYLK).

This sequence belongs to the ATPase A chain family. F-type ATPases have 2 components, CF(1) - the catalytic core - and CF(0) - the membrane proton channel. CF(1) has five subunits: alpha(3), beta(3), gamma(1), delta(1), epsilon(1). CF(0) has three main subunits: a(1), b(2) and c(9-12). The alpha and beta chains form an alternating ring which encloses part of the gamma chain. CF(1) is attached to CF(0) by a central stalk formed by the gamma and epsilon chains, while a peripheral stalk is formed by the delta and b chains.

The protein localises to the cell inner membrane. Key component of the proton channel; it plays a direct role in the translocation of protons across the membrane. This Oleidesulfovibrio alaskensis (strain ATCC BAA-1058 / DSM 17464 / G20) (Desulfovibrio alaskensis) protein is ATP synthase subunit a.